Consider the following 264-residue polypeptide: Hydroxyethylthiazole kinase (264 aa).

Residue Met52 coordinates substrate. Residues Arg127 and Thr173 each coordinate ATP. Gly200 contacts substrate.

This sequence belongs to the Thz kinase family. Requires Mg(2+) as cofactor.

The enzyme catalyses 5-(2-hydroxyethyl)-4-methylthiazole + ATP = 4-methyl-5-(2-phosphooxyethyl)-thiazole + ADP + H(+). The protein operates within cofactor biosynthesis; thiamine diphosphate biosynthesis; 4-methyl-5-(2-phosphoethyl)-thiazole from 5-(2-hydroxyethyl)-4-methylthiazole: step 1/1. Catalyzes the phosphorylation of the hydroxyl group of 4-methyl-5-beta-hydroxyethylthiazole (THZ). This chain is Hydroxyethylthiazole kinase, found in Pectobacterium carotovorum subsp. carotovorum (strain PC1).